Here is a 141-residue protein sequence, read N- to C-terminus: Hemoglobin subunit alpha-A (141 aa).

The Globin domain occupies 1–141 (VLSASDKSNV…VGTVLTAKYR (141 aa)). H58 lines the O2 pocket. Residue H87 coordinates heme b.

This sequence belongs to the globin family. As to quaternary structure, heterotetramer of two alpha chains and two beta chains. In terms of tissue distribution, red blood cells.

Its function is as follows. Involved in oxygen transport from the lung to the various peripheral tissues. This is Hemoglobin subunit alpha-A (HBAA) from Streptopelia orientalis (Eastern turtle dove).